The sequence spans 485 residues: Glutamyl-tRNA(Gln) amidotransferase subunit A (485 aa).

Residues Lys-76 and Ser-151 each act as charge relay system in the active site. Ser-175 functions as the Acyl-ester intermediate in the catalytic mechanism.

This sequence belongs to the amidase family. GatA subfamily. Heterotrimer of A, B and C subunits.

It carries out the reaction L-glutamyl-tRNA(Gln) + L-glutamine + ATP + H2O = L-glutaminyl-tRNA(Gln) + L-glutamate + ADP + phosphate + H(+). Its function is as follows. Allows the formation of correctly charged Gln-tRNA(Gln) through the transamidation of misacylated Glu-tRNA(Gln) in organisms which lack glutaminyl-tRNA synthetase. The reaction takes place in the presence of glutamine and ATP through an activated gamma-phospho-Glu-tRNA(Gln). This chain is Glutamyl-tRNA(Gln) amidotransferase subunit A, found in Thiobacillus denitrificans (strain ATCC 25259 / T1).